The primary structure comprises 237 residues: Pyridoxine 5'-phosphate synthase (237 aa).

3-amino-2-oxopropyl phosphate-binding residues include Asn-7 and Arg-18. The active-site Proton acceptor is the His-43. 2 residues coordinate 1-deoxy-D-xylulose 5-phosphate: Arg-45 and His-50. Glu-70 acts as the Proton acceptor in catalysis. A 1-deoxy-D-xylulose 5-phosphate-binding site is contributed by Thr-100. The active-site Proton donor is His-190. 3-amino-2-oxopropyl phosphate is bound by residues Asp-191 and 213-214; that span reads GH.

Belongs to the PNP synthase family. In terms of assembly, homooctamer; tetramer of dimers.

The protein localises to the cytoplasm. The enzyme catalyses 3-amino-2-oxopropyl phosphate + 1-deoxy-D-xylulose 5-phosphate = pyridoxine 5'-phosphate + phosphate + 2 H2O + H(+). It functions in the pathway cofactor biosynthesis; pyridoxine 5'-phosphate biosynthesis; pyridoxine 5'-phosphate from D-erythrose 4-phosphate: step 5/5. In terms of biological role, catalyzes the complicated ring closure reaction between the two acyclic compounds 1-deoxy-D-xylulose-5-phosphate (DXP) and 3-amino-2-oxopropyl phosphate (1-amino-acetone-3-phosphate or AAP) to form pyridoxine 5'-phosphate (PNP) and inorganic phosphate. This is Pyridoxine 5'-phosphate synthase from Christiangramia forsetii (strain DSM 17595 / CGMCC 1.15422 / KT0803) (Gramella forsetii).